Consider the following 192-residue polypeptide: FAD-linked sulfhydryl oxidase erv2 (192 aa).

Over 1-8 the chain is Cytoplasmic; the sequence is MILNRRIQ. A helical; Signal-anchor membrane pass occupies residues 9–29; it reads VILPTLLILSFIIWIFHSVMV. Residues 30-192 are Lumenal-facing; it reads DKDWRLFMPE…VINEDHDYSG (163 aa). An ERV/ALR sulfhydryl oxidase domain is found at 61-162; that stretch reads HDNNTNNLMV…TSCDGFNERY (102 aa). FAD-binding residues include W74, C138, H141, N145, and Y162. Residues C138 and C155 are joined by a disulfide bond.

It depends on FAD as a cofactor.

It localises to the endoplasmic reticulum membrane. The protein resides in the cytoplasm. Its subcellular location is the nucleus. It catalyses the reaction 2 R'C(R)SH + O2 = R'C(R)S-S(R)CR' + H2O2. In terms of biological role, FAD-dependent sulfhydryl oxidase that catalyzes disulfide bond formation in the endoplasmic reticulum lumen. The protein is FAD-linked sulfhydryl oxidase erv2 (erv2) of Schizosaccharomyces pombe (strain 972 / ATCC 24843) (Fission yeast).